Here is a 1056-residue protein sequence, read N- to C-terminus: E3 SUMO-protein ligase ZNF451 (1056 aa).

Residues 1–39 (MGDPGPEIIESVPPAGPEASESTTDENEDDIQFVSEGPL) are disordered. Residues 1–246 (MGDPGPEIIE…AADGHSNSLL (246 aa)) form a sufficient for E3 SUMO-protein ligase activity region. The tract at residues 1-344 (MGDPGPEIIE…RVRCQNAGPV (344 aa)) is important for interaction with SUMO1 and SUMO2. The interval 30-37 (DIQFVSEG) is interaction with SUMO2 1. The PLRP motif lies at 38-41 (PLRP). Residues 42-50 (VLEYIDLVS) form an interaction with SUMO2 2 region. Residues K75, K77, K106, K139, and K153 each participate in a glycyl lysine isopeptide (Lys-Gly) (interchain with G-Cter in SUMO2) cross-link. Residue S155 is modified to Phosphoserine. R158 is modified (omega-N-methylarginine). K167 is covalently cross-linked (Glycyl lysine isopeptide (Lys-Gly) (interchain with G-Cter in SUMO2)). The segment at 168-521 (PILCPIMHCN…HMSRFHGGAH (354 aa)) is important for interaction with SMAD4. The C2H2-type 1 zinc finger occupies 169–195 (ILCPIMHCNKEFDNGHLLLGHLKRFDH). Residues 212-234 (FACAVCYEHFVTQQQYKDHLLSR) form a C2H2-type 2; degenerate zinc finger. The C2H2-type 3 zinc-finger motif lies at 253–277 (YACPQCFLLFSTKDECLKHMSTKNH). Residues K270, K275, K283, K288, K301, and K309 each participate in a glycyl lysine isopeptide (Lys-Gly) (interchain with G-Cter in SUMO2) cross-link. The C2H2-type 4; atypical zinc finger occupies 315–338 (VKCVACHQTLRSHMELTAHFRVRC). Residues 362–385 (GYCSDCNQVFMDVASTQSHKNSGH) form a C2H2-type 5 zinc finger. A Glycyl lysine isopeptide (Lys-Gly) (interchain with G-Cter in SUMO2) cross-link involves residue K420. Residue S429 is modified to Phosphoserine. K431 participates in a covalent cross-link: Glycyl lysine isopeptide (Lys-Gly) (interchain with G-Cter in SUMO2). 2 consecutive C2H2-type zinc fingers follow at residues 494–517 (YKCV…SRFH) and 527–550 (FWCR…TEFH). Glycyl lysine isopeptide (Lys-Gly) (interchain with G-Cter in SUMO2) cross-links involve residues K539 and K583. The C2H2-type 8; atypical zinc finger occupies 604-629 (WQCRICEDMFESQECVKQHCMSLTSH). 2 C2H2-type zinc fingers span residues 634-657 (YSCA…QDEH) and 665-688 (YFCG…KEHH). K645 is covalently cross-linked (Glycyl lysine isopeptide (Lys-Gly) (interchain with G-Cter in SUMO2)). K704 participates in a covalent cross-link: Glycyl lysine isopeptide (Lys-Gly) (interchain with G-Cter in SUMO1); alternate. K704 is covalently cross-linked (Glycyl lysine isopeptide (Lys-Gly) (interchain with G-Cter in SUMO2); alternate). Glycyl lysine isopeptide (Lys-Gly) (interchain with G-Cter in SUMO2) cross-links involve residues K729 and K746. C2H2-type zinc fingers lie at residues 751-774 (FRCS…CQVH) and 787-810 (IKCG…HRKH). Glycyl lysine isopeptide (Lys-Gly) (interchain with G-Cter in SUMO2) cross-links involve residues K788, K815, K843, K849, K947, K988, and K989. 2 disordered regions span residues 806–830 (FHRK…STCQ) and 839–858 (EKNL…KGAE). The segment covering 849–858 (KHSDVEKGAE) has biased composition (basic and acidic residues). The tract at residues 1019-1045 (KECDSDDSSGMKGSPAEELRATEDVEL) is disordered. A compositionally biased stretch (basic and acidic residues) spans 1033–1045 (PAEELRATEDVEL). The important for ubiquitin binding stretch occupies residues 1045-1056 (LEEAIRRSLEEM).

Belongs to the krueppel C2H2-type zinc-finger protein family. As to quaternary structure, homooligomer. Interacts (via N-terminal region) with SUMO1. Interacts (via N-terminal region) with SUMO2. Interacts simultaneously with two SUMO2 chains. Identified in a complex with SUMO2 and UBE2I/UBC9, where one ZNF451 interacts with one UBE2I/UBC9 and two SUMO2 chains, one bound to the UBE2I/UBC9 active site and the other to another region of the same UBE2I/UBC9 molecule. Interacts (via C-terminus) with ubiquitin. Interacts (via N-terminal zinc-finger domains) with SMAD4 (via MH2 domain). Interacts with SMAD2 and SMAD3. Identified in a complex that contains at least ZNF451, SMAD2, SMAD3 and SMAD4. Interacts with EP300. Inhibits interaction between EP300 and the SMAD4 complex. Interacts with SIMC1. Sumoylated. Predominantly sumoylated on the N-terminal region that is important for interaction with SUMO1 and SUMO2. Sumoylation is important for localization in nuclear granules; desumoylation leads to diffuse nucleoplasmic location. Autosumoylated (in vitro). Sumoylation enhances E3 SUMO-protein ligase activity.

It localises to the nucleus. Its subcellular location is the PML body. It is found in the nucleoplasm. It participates in protein modification; protein sumoylation. In terms of biological role, E3 SUMO-protein ligase; has a preference for SUMO2 and SUMO3 and facilitates UBE2I/UBC9-mediated sumoylation of target proteins. Plays a role in protein SUMO2 modification in response to stress caused by DNA damage and by proteasome inhibitors (in vitro). Required for MCM4 sumoylation. Has no activity with SUMO1. Preferentially transfers an additional SUMO2 chain onto the SUMO2 consensus site 'Lys-11'. Negatively regulates transcriptional activation mediated by the SMAD4 complex in response to TGF-beta signaling. Inhibits EP300-mediated acetylation of histone H3 at 'Lys-9'. Plays a role in regulating the transcription of AR targets. This Mus musculus (Mouse) protein is E3 SUMO-protein ligase ZNF451 (Znf451).